A 146-amino-acid polypeptide reads, in one-letter code: Large ribosomal subunit protein uL15 (146 aa).

The segment covering 1 to 13 (MKLHELKAAEGSR) has biased composition (basic and acidic residues). The interval 1 to 56 (MKLHELKAAEGSRRVRNRVGRGAGSGNGKTSGRGQKGQKARSGGGVRPGFEGGQLP) is disordered. Gly residues-rich tracts occupy residues 21–35 (RGAGSGNGKTSGRGQ) and 42–52 (SGGGVRPGFEG).

It belongs to the universal ribosomal protein uL15 family. Part of the 50S ribosomal subunit.

Its function is as follows. Binds to the 23S rRNA. This is Large ribosomal subunit protein uL15 from Staphylococcus haemolyticus (strain JCSC1435).